A 70-amino-acid polypeptide reads, in one-letter code: UPF0352 protein PBPRA2586 (70 aa).

It belongs to the UPF0352 family.

This chain is UPF0352 protein PBPRA2586, found in Photobacterium profundum (strain SS9).